The following is a 277-amino-acid chain: 3-methyl-2-oxobutanoate hydroxymethyltransferase (277 aa).

Positions 43 and 82 each coordinate Mg(2+). Residues 43-44 (DS), Asp-82, and Lys-112 contribute to the 3-methyl-2-oxobutanoate site. Residue Glu-114 participates in Mg(2+) binding. The Proton acceptor role is filled by Glu-181.

It belongs to the PanB family. In terms of assembly, homodecamer; pentamer of dimers. Mg(2+) is required as a cofactor.

The protein localises to the cytoplasm. It carries out the reaction 3-methyl-2-oxobutanoate + (6R)-5,10-methylene-5,6,7,8-tetrahydrofolate + H2O = 2-dehydropantoate + (6S)-5,6,7,8-tetrahydrofolate. It participates in cofactor biosynthesis; (R)-pantothenate biosynthesis; (R)-pantoate from 3-methyl-2-oxobutanoate: step 1/2. Functionally, catalyzes the reversible reaction in which hydroxymethyl group from 5,10-methylenetetrahydrofolate is transferred onto alpha-ketoisovalerate to form ketopantoate. The polypeptide is 3-methyl-2-oxobutanoate hydroxymethyltransferase (Listeria monocytogenes serovar 1/2a (strain ATCC BAA-679 / EGD-e)).